The following is a 383-amino-acid chain: Soluble hydrogenase 42 kDa subunit (383 aa).

The residue at position 194 (Lys-194) is an N6-(pyridoxal phosphate)lysine.

This sequence belongs to the class-V pyridoxal-phosphate-dependent aminotransferase family. In terms of assembly, heterodimer of a large and a small subunit. Pyridoxal 5'-phosphate serves as cofactor.

Its subcellular location is the cytoplasm. Functionally, soluble hydrogenase catalyzes both production and consumption of hydrogen from suitable artificial electron donors or acceptors. This subunit catalyzes the tritium-exchange activity. This chain is Soluble hydrogenase 42 kDa subunit, found in Anabaena cylindrica.